The primary structure comprises 400 residues: Deoxyguanosinetriphosphate triphosphohydrolase-like protein (400 aa).

In terms of domain architecture, HD spans 73 to 215 (RLTHSIEVSQ…AAIADDIAYN (143 aa)).

The protein belongs to the dGTPase family. Type 2 subfamily.

In Bartonella tribocorum (strain CIP 105476 / IBS 506), this protein is Deoxyguanosinetriphosphate triphosphohydrolase-like protein.